The sequence spans 618 residues: Proline--tRNA ligase (618 aa).

Belongs to the class-II aminoacyl-tRNA synthetase family. ProS type 1 subfamily. In terms of assembly, homodimer.

The protein resides in the cytoplasm. The enzyme catalyses tRNA(Pro) + L-proline + ATP = L-prolyl-tRNA(Pro) + AMP + diphosphate. Its function is as follows. Catalyzes the attachment of proline to tRNA(Pro) in a two-step reaction: proline is first activated by ATP to form Pro-AMP and then transferred to the acceptor end of tRNA(Pro). As ProRS can inadvertently accommodate and process non-cognate amino acids such as alanine and cysteine, to avoid such errors it has two additional distinct editing activities against alanine. One activity is designated as 'pretransfer' editing and involves the tRNA(Pro)-independent hydrolysis of activated Ala-AMP. The other activity is designated 'posttransfer' editing and involves deacylation of mischarged Ala-tRNA(Pro). The misacylated Cys-tRNA(Pro) is not edited by ProRS. The polypeptide is Proline--tRNA ligase (Streptococcus pyogenes serotype M5 (strain Manfredo)).